A 299-amino-acid polypeptide reads, in one-letter code: Nitrogenase iron protein (299 aa).

11-18 contributes to the ATP binding site; sequence GKGGIGKS. Position 99 (cysteine 99) interacts with [4Fe-4S] cluster. ADP-ribosylarginine; by dinitrogenase reductase ADP-ribosyltransferase is present on arginine 102. Cysteine 133 serves as a coordination point for [4Fe-4S] cluster.

Belongs to the NifH/BchL/ChlL family. In terms of assembly, homodimer. [4Fe-4S] cluster is required as a cofactor. The reversible ADP-ribosylation of Arg-102 inactivates the nitrogenase reductase and regulates nitrogenase activity.

It carries out the reaction N2 + 8 reduced [2Fe-2S]-[ferredoxin] + 16 ATP + 16 H2O = H2 + 8 oxidized [2Fe-2S]-[ferredoxin] + 2 NH4(+) + 16 ADP + 16 phosphate + 6 H(+). Its function is as follows. The key enzymatic reactions in nitrogen fixation are catalyzed by the nitrogenase complex, which has 2 components: the iron protein and the molybdenum-iron protein. This chain is Nitrogenase iron protein, found in Rhodopseudomonas palustris (strain BisB5).